A 985-amino-acid chain; its full sequence is Ephrin type-A receptor 4-B (985 aa).

Positions 1-20 (MAGIVHGILFCGLFGLCWAV) are cleaved as a signal peptide. Residues 21–547 (TGSRIYPASE…MIGEGTSPTV (527 aa)) are Extracellular-facing. In terms of domain architecture, Eph LBD spans 30-209 (EVTLLDSRSV…FYKKCPLTVR (180 aa)). Fibronectin type-III domains are found at residues 328-438 (PPSA…TNQA) and 439-536 (APST…TVPS). Residues Asn340 and Asn407 are each glycosylated (N-linked (GlcNAc...) asparagine). A helical transmembrane segment spans residues 548–569 (LLVSVAGSIVLVVILIAAFVIS). Residues 570 to 985 (RRRSKYSKAK…QQMQGRMVPV (416 aa)) lie on the Cytoplasmic side of the membrane. A phosphotyrosine; by autocatalysis mark is found at Tyr595 and Tyr601. The Protein kinase domain maps to 620-881 (IKIEKVIGVG…QIVSMLDKLI (262 aa)). ATP-binding positions include 626–634 (IGVGEFGEV) and Lys652. The Proton acceptor role is filled by Asp745. Phosphotyrosine; by autocatalysis is present on residues Tyr778 and Tyr927. Positions 910–974 (SQVASVLDWL…LSSVQGMRTQ (65 aa)) constitute an SAM domain. A PDZ-binding motif is present at residues 983–985 (VPV).

It belongs to the protein kinase superfamily. Tyr protein kinase family. Ephrin receptor subfamily. Localized expression in a subset of neural crest and neural tissues in embryos.

Its subcellular location is the cell membrane. It localises to the early endosome. It catalyses the reaction L-tyrosyl-[protein] + ATP = O-phospho-L-tyrosyl-[protein] + ADP + H(+). Receptor tyrosine kinase which binds membrane-bound ephrin family ligands residing on adjacent cells, leading to contact-dependent bidirectional signaling into neighboring cells. The signaling pathway downstream of the receptor is referred to as forward signaling while the signaling pathway downstream of the ephrin ligand is referred to as reverse signaling. Highly promiscuous, it has the unique property among Eph receptors to bind and to be physiologically activated by both GPI-anchored ephrin-A and transmembrane ephrin-B ligands including EFNA1 and EFNB3. Upon activation by ephrin ligands, modulates cell morphology and integrin-dependent cell adhesion through regulation of the Rac, Rap and Rho GTPases activity. Plays an important role in the development of the nervous system controlling different steps of axonal guidance including the establishment of the corticospinal projections. The chain is Ephrin type-A receptor 4-B (epha4-b) from Xenopus laevis (African clawed frog).